The following is a 166-amino-acid chain: Interleukin-3 (166 aa).

Residues 1-27 (MVLASSTTSILCMLLPLLMLFHQGLQI) form the signal peptide. Cystine bridges form between cysteine 43–cysteine 106 and cysteine 105–cysteine 166. Asparagine 60 and asparagine 70 each carry an N-linked (GlcNAc...) asparagine glycan. The interval 145–166 (SVSRPPQPTSSSDNFRPMTVEC) is disordered.

The protein belongs to the IL-3 family. Monomer. As to expression, activated T-cells, mast cells, natural killer cells.

It is found in the secreted. Cytokine secreted predominantly by activated T-lymphocytes as well as mast cells and osteoblastic cells that controls the production and differentiation of hematopoietic progenitor cells into lineage-restricted cells. Also stimulates mature basophils, eosinophils, and monocytes to become functionally activated. In addition, plays an important role in neural cell proliferation and survival. Participates as well in bone homeostasis and inhibits osteoclast differentiation by preventing NF-kappa-B nuclear translocation and activation. Mechanistically, exerts its biological effects through a receptor composed of IL3RA subunit and a signal transducing subunit IL3RB. Receptor stimulation results in the rapid activation of JAK2 kinase activity leading to STAT5-mediated transcriptional program. Alternatively, contributes to cell survival under oxidative stress in non-hematopoietic systems by activating pathways mediated by PI3K/AKT and ERK. The protein is Interleukin-3 (Il3) of Rattus norvegicus (Rat).